The following is a 716-amino-acid chain: Fatty acid oxidation complex subunit alpha (716 aa).

The tract at residues 1–188 (MIYQSPTIQV…KVGAIDAVVA (188 aa)) is enoyl-CoA hydratase/isomerase. Asp-295 provides a ligand contact to substrate. The 3-hydroxyacyl-CoA dehydrogenase stretch occupies residues 310-716 (KDIKHAAVLG…SNNGSYYPKA (407 aa)). NAD(+) is bound by residues Met-323, Asp-342, 399–401 (VVE), Lys-406, and Ser-428. Residue His-449 is the For 3-hydroxyacyl-CoA dehydrogenase activity of the active site. Residue Asn-452 coordinates NAD(+). Positions 499 and 659 each coordinate substrate.

It in the N-terminal section; belongs to the enoyl-CoA hydratase/isomerase family. In the C-terminal section; belongs to the 3-hydroxyacyl-CoA dehydrogenase family. In terms of assembly, heterotetramer of two alpha chains (FadB) and two beta chains (FadA).

The catalysed reaction is a (3S)-3-hydroxyacyl-CoA + NAD(+) = a 3-oxoacyl-CoA + NADH + H(+). It catalyses the reaction a (3S)-3-hydroxyacyl-CoA = a (2E)-enoyl-CoA + H2O. It carries out the reaction a 4-saturated-(3S)-3-hydroxyacyl-CoA = a (3E)-enoyl-CoA + H2O. The enzyme catalyses (3S)-3-hydroxybutanoyl-CoA = (3R)-3-hydroxybutanoyl-CoA. The catalysed reaction is a (3Z)-enoyl-CoA = a 4-saturated (2E)-enoyl-CoA. It catalyses the reaction a (3E)-enoyl-CoA = a 4-saturated (2E)-enoyl-CoA. It participates in lipid metabolism; fatty acid beta-oxidation. Its function is as follows. Involved in the aerobic and anaerobic degradation of long-chain fatty acids via beta-oxidation cycle. Catalyzes the formation of 3-oxoacyl-CoA from enoyl-CoA via L-3-hydroxyacyl-CoA. It can also use D-3-hydroxyacyl-CoA and cis-3-enoyl-CoA as substrate. The chain is Fatty acid oxidation complex subunit alpha from Shewanella amazonensis (strain ATCC BAA-1098 / SB2B).